The sequence spans 229 residues: ATP synthase subunit a (229 aa).

The next 6 helical transmembrane spans lie at 25–45 (ADAV…SIAA), 82–102 (FFPL…IGLI), 104–124 (GFFP…VVFV), 142–162 (FLGP…IGHL), 181–201 (LVLI…MMLM), and 202–222 (GVLV…IYIQ).

This sequence belongs to the ATPase A chain family. F-type ATPases have 2 components, CF(1) - the catalytic core - and CF(0) - the membrane proton channel. CF(1) has five subunits: alpha(3), beta(3), gamma(1), delta(1), epsilon(1). CF(0) has three main subunits: a(1), b(2) and c(9-12). The alpha and beta chains form an alternating ring which encloses part of the gamma chain. CF(1) is attached to CF(0) by a central stalk formed by the gamma and epsilon chains, while a peripheral stalk is formed by the delta and b chains.

It is found in the cell inner membrane. Its function is as follows. Key component of the proton channel; it plays a direct role in the translocation of protons across the membrane. The chain is ATP synthase subunit a from Geobacter sp. (strain M21).